Consider the following 683-residue polypeptide: Cytochrome P450 monooxygenase htyF (683 aa).

The chain crosses the membrane as a helical span at residues 8–28 (PALLAASVVLAVSLVSYVIQL). N-linked (GlcNAc...) asparagine glycosylation occurs at Asn29. Position 481 (Cys481) interacts with heme. Asn581 is a glycosylation site (N-linked (GlcNAc...) asparagine). Residues 588–608 (LYVFVVLVACVAALFIGIGIY) form a helical membrane-spanning segment.

This sequence belongs to the cytochrome P450 family. The cofactor is heme.

The protein localises to the membrane. It participates in antifungal biosynthesis. Functionally, cytochrome P450 monooxygenase; part of the gene cluster that mediates the de novo generation of L-homotyrosine from acetyl-CoA and 4-hydroxyphenyl-pyruvate. L-homotyrosine is a building block of echinocandin B, a fungal lipidated cyclic hexapeptide that acts as an antifungal agent. L-homotyrosine 4-hydroxyphenyl-pyruvate first undergoes an aldol-type condensation by htyA with the C-2 of acetyl-CoA followed by the release of CoA to form 2-(4-hydroxybenzyl)-malate. This is followed by isomerization of 2-(4-hydroxy-benzyl)-malate to 3-(4-hydroxybenzyl)-malate by htyD. Thereafter, 3-(4-hydroxybenzyl)-malate undergoes decarboxylation and oxidation to form 2-oxo-4-(4-hydroxybenzyl)butanoic acid, coupled to reduction of NAD(+) to NADH by htyC. The product then undergoes transamination catalyzed by htyB to form L-homotyrosine. The sequence is that of Cytochrome P450 monooxygenase htyF from Aspergillus rugulosus (Emericella rugulosa).